A 489-amino-acid chain; its full sequence is Glycogen synthase (489 aa).

Lysine 15 is a binding site for ADP-alpha-D-glucose.

Belongs to the glycosyltransferase 1 family. Bacterial/plant glycogen synthase subfamily.

The enzyme catalyses [(1-&gt;4)-alpha-D-glucosyl](n) + ADP-alpha-D-glucose = [(1-&gt;4)-alpha-D-glucosyl](n+1) + ADP + H(+). The protein operates within glycan biosynthesis; glycogen biosynthesis. Its function is as follows. Synthesizes alpha-1,4-glucan chains using ADP-glucose. This Francisella tularensis subsp. tularensis (strain SCHU S4 / Schu 4) protein is Glycogen synthase.